We begin with the raw amino-acid sequence, 355 residues long: UPF0421 protein BALH_2468 (355 aa).

The next 4 membrane-spanning stretches (helical) occupy residues 19–39 (IAVFLTVLVCEFFNIPTIFAV), 74–94 (FTFFLGHQALSYALAAMFTIV), 109–129 (TLTAVAMIPITADHYFTAFLI), and 131–151 (LATTSTGIIVSTVVNFFILPP).

This sequence belongs to the UPF0421 family.

The protein localises to the cell membrane. This Bacillus thuringiensis (strain Al Hakam) protein is UPF0421 protein BALH_2468.